Here is a 195-residue protein sequence, read N- to C-terminus: Penicillin-binding protein activator LpoB (195 aa).

Positions 1 to 16 (MKKRALIVLAALVLAS) are cleaved as a signal peptide. A lipid anchor (N-palmitoyl cysteine) is attached at Cys17. The S-diacylglycerol cysteine moiety is linked to residue Cys17. Residues 19 to 51 (SRKPASPPAPIEPVPPPVTVSVQPPPPATSEPV) form a disordered region. Over residues 23–51 (ASPPAPIEPVPPPVTVSVQPPPPATSEPV) the composition is skewed to pro residues.

It belongs to the LpoB family. In terms of assembly, interacts with PBP1b.

It localises to the cell outer membrane. Regulator of peptidoglycan synthesis that is essential for the function of penicillin-binding protein 1B (PBP1b). The sequence is that of Penicillin-binding protein activator LpoB from Sodalis glossinidius (strain morsitans).